A 236-amino-acid chain; its full sequence is Purine nucleoside phosphorylase DeoD-type 2 (236 aa).

H5 is an a purine D-ribonucleoside binding site. Phosphate-binding positions include G21, R25, R44, and 88–91 (RVGT). Residues 180 to 182 (EME) and 204 to 205 (SD) contribute to the a purine D-ribonucleoside site. D205 serves as the catalytic Proton donor.

It belongs to the PNP/UDP phosphorylase family. In terms of assembly, homohexamer; trimer of homodimers.

The catalysed reaction is a purine D-ribonucleoside + phosphate = a purine nucleobase + alpha-D-ribose 1-phosphate. It catalyses the reaction a purine 2'-deoxy-D-ribonucleoside + phosphate = a purine nucleobase + 2-deoxy-alpha-D-ribose 1-phosphate. Functionally, catalyzes the reversible phosphorolytic breakdown of the N-glycosidic bond in the beta-(deoxy)ribonucleoside molecules, with the formation of the corresponding free purine bases and pentose-1-phosphate. The polypeptide is Purine nucleoside phosphorylase DeoD-type 2 (Shewanella oneidensis (strain ATCC 700550 / JCM 31522 / CIP 106686 / LMG 19005 / NCIMB 14063 / MR-1)).